A 177-amino-acid polypeptide reads, in one-letter code: Ferritin light chain, oocyte isoform (177 aa).

Residues 9–158 (QNYHEESEAG…DHLTNLRRVK (150 aa)) form the Ferritin-like diiron domain. Fe cation contacts are provided by E26, H64, and E106.

The protein belongs to the ferritin family. Oligomer of 24 subunits. There are two types of subunits: L (light) chain and H (heavy) chain. The functional molecule is roughly spherical and contains a central cavity into which the insoluble mineral iron core is deposited.

Its function is as follows. Stores iron in a soluble, non-toxic, readily available form. Important for iron homeostasis. Iron is taken up in the ferrous form and deposited as ferric hydroxides after oxidation. This is Ferritin light chain, oocyte isoform from Xenopus laevis (African clawed frog).